A 507-amino-acid chain; its full sequence is Putative F-box/LRR-repeat protein At4g00320 (507 aa).

The F-box domain maps to Arg-12 to Ser-60. LRR repeat units lie at residues Arg-135–Phe-163, Tyr-187–Asn-212, Ile-214–Arg-240, Ile-317–Thr-348, and Gly-349–Gly-374.

This Arabidopsis thaliana (Mouse-ear cress) protein is Putative F-box/LRR-repeat protein At4g00320.